A 187-amino-acid polypeptide reads, in one-letter code: Ribosome-recycling factor (187 aa).

The protein belongs to the RRF family.

Its subcellular location is the cytoplasm. Its function is as follows. Responsible for the release of ribosomes from messenger RNA at the termination of protein biosynthesis. May increase the efficiency of translation by recycling ribosomes from one round of translation to another. This Nitrobacter winogradskyi (strain ATCC 25391 / DSM 10237 / CIP 104748 / NCIMB 11846 / Nb-255) protein is Ribosome-recycling factor.